The chain runs to 166 residues: Large ribosomal subunit protein bL19 (166 aa).

Belongs to the bacterial ribosomal protein bL19 family.

In terms of biological role, this protein is located at the 30S-50S ribosomal subunit interface and may play a role in the structure and function of the aminoacyl-tRNA binding site. This chain is Large ribosomal subunit protein bL19, found in Chelativorans sp. (strain BNC1).